A 280-amino-acid polypeptide reads, in one-letter code: Phosphonates import ATP-binding protein PhnC (280 aa).

The ABC transporter domain maps to 2-245 (FELKNVTRRF…AVKEIYGTDK (244 aa)). 34 to 41 (GRSGAGKS) contributes to the ATP binding site. Residues 257–280 (TSLESKRRAEDVSSGRVAKAAAVH) are disordered. A compositionally biased stretch (basic and acidic residues) spans 260–269 (ESKRRAEDVS).

This sequence belongs to the ABC transporter superfamily. Phosphonates importer (TC 3.A.1.9.1) family. As to quaternary structure, the complex is composed of two ATP-binding proteins (PhnC), two transmembrane proteins (PhnE) and a solute-binding protein (PhnD).

It is found in the cell inner membrane. The enzyme catalyses phosphonate(out) + ATP + H2O = phosphonate(in) + ADP + phosphate + H(+). Its function is as follows. Part of the ABC transporter complex PhnCDE involved in phosphonates import. Responsible for energy coupling to the transport system. This chain is Phosphonates import ATP-binding protein PhnC, found in Rhizobium johnstonii (strain DSM 114642 / LMG 32736 / 3841) (Rhizobium leguminosarum bv. viciae).